Consider the following 346-residue polypeptide: Nicotinate-nucleotide--dimethylbenzimidazole phosphoribosyltransferase (346 aa).

E312 serves as the catalytic Proton acceptor.

It belongs to the CobT family.

The enzyme catalyses 5,6-dimethylbenzimidazole + nicotinate beta-D-ribonucleotide = alpha-ribazole 5'-phosphate + nicotinate + H(+). The protein operates within nucleoside biosynthesis; alpha-ribazole biosynthesis; alpha-ribazole from 5,6-dimethylbenzimidazole: step 1/2. In terms of biological role, catalyzes the synthesis of alpha-ribazole-5'-phosphate from nicotinate mononucleotide (NAMN) and 5,6-dimethylbenzimidazole (DMB). The chain is Nicotinate-nucleotide--dimethylbenzimidazole phosphoribosyltransferase from Cupriavidus necator (strain ATCC 17699 / DSM 428 / KCTC 22496 / NCIMB 10442 / H16 / Stanier 337) (Ralstonia eutropha).